A 278-amino-acid polypeptide reads, in one-letter code: Large ribosomal subunit protein uL2c (278 aa).

The interval G222 to I241 is disordered.

The protein belongs to the universal ribosomal protein uL2 family. As to quaternary structure, part of the 50S ribosomal subunit.

It is found in the plastid. The protein localises to the chloroplast. This chain is Large ribosomal subunit protein uL2c (rpl2), found in Tupiella akineta (Green alga).